The chain runs to 292 residues: 4-diphosphocytidyl-2-C-methyl-D-erythritol kinase (292 aa).

K10 is an active-site residue. 100 to 110 (PIGSGLGGGSS) is a binding site for ATP. The active site involves D142.

It belongs to the GHMP kinase family. IspE subfamily. In terms of assembly, homodimer.

It carries out the reaction 4-CDP-2-C-methyl-D-erythritol + ATP = 4-CDP-2-C-methyl-D-erythritol 2-phosphate + ADP + H(+). It functions in the pathway isoprenoid biosynthesis; isopentenyl diphosphate biosynthesis via DXP pathway; isopentenyl diphosphate from 1-deoxy-D-xylulose 5-phosphate: step 3/6. Functionally, catalyzes the phosphorylation of the position 2 hydroxy group of 4-diphosphocytidyl-2C-methyl-D-erythritol. This chain is 4-diphosphocytidyl-2-C-methyl-D-erythritol kinase, found in Buchnera aphidicola subsp. Schizaphis graminum (strain Sg).